The primary structure comprises 178 residues: Alkyl hydroperoxide reductase AhpD (178 aa).

Catalysis depends on Cys130, which acts as the Proton donor. Cys130 and Cys133 are oxidised to a cystine. Catalysis depends on Cys133, which acts as the Cysteine sulfenic acid (-SOH) intermediate.

It belongs to the AhpD family. Homotrimer.

The catalysed reaction is N(6)-[(R)-dihydrolipoyl]-L-lysyl-[lipoyl-carrier protein] + a hydroperoxide = N(6)-[(R)-lipoyl]-L-lysyl-[lipoyl-carrier protein] + an alcohol + H2O. Antioxidant protein with alkyl hydroperoxidase activity. Required for the reduction of the AhpC active site cysteine residues and for the regeneration of the AhpC enzyme activity. The protein is Alkyl hydroperoxide reductase AhpD of Mycobacterium ulcerans (strain Agy99).